The chain runs to 114 residues: Nuclear transition protein 2 (114 aa).

The interval 1 to 114 (MDTKMQSLPT…KRRSSGRRYK (114 aa)) is disordered. The Zn(2+) site is built by H12, H14, H16, H24, C29, C31, C35, and C38. Over residues 16–25 (HSSSRPQSHT) the composition is skewed to low complexity. The short motif at 87–95 (GKVSKRKAV) is the Nuclear localization signal element. Positions 90–114 (SKRKAVRRRKRTHRAKRRSSGRRYK) are enriched in basic residues. Phosphothreonine; by PKA is present on T101. Phosphoserine; by PKA is present on S109.

Belongs to the nuclear transition protein 2 family. Testis.

The protein resides in the nucleus. It localises to the nucleolus. It is found in the chromosome. Its function is as follows. Plays a key role in the replacement of histones to protamine in the elongating spermatids of mammals. In condensing spermatids, loaded onto the nucleosomes, where it promotes the recruitment and processing of protamines, which are responsible for histone eviction. In Rattus norvegicus (Rat), this protein is Nuclear transition protein 2 (Tnp2).